The chain runs to 279 residues: NADPH-dependent 7-cyano-7-deazaguanine reductase (279 aa).

86-88 (VES) is a substrate binding site. Residue 88 to 89 (SK) coordinates NADPH. Residue C187 is the Thioimide intermediate of the active site. Residue D194 is the Proton donor of the active site. A substrate-binding site is contributed by 226 to 227 (HE). 255-256 (RG) is a binding site for NADPH.

This sequence belongs to the GTP cyclohydrolase I family. QueF type 2 subfamily. In terms of assembly, homodimer.

It localises to the cytoplasm. It catalyses the reaction 7-aminomethyl-7-carbaguanine + 2 NADP(+) = 7-cyano-7-deazaguanine + 2 NADPH + 3 H(+). Its pathway is tRNA modification; tRNA-queuosine biosynthesis. Catalyzes the NADPH-dependent reduction of 7-cyano-7-deazaguanine (preQ0) to 7-aminomethyl-7-deazaguanine (preQ1). This Actinobacillus succinogenes (strain ATCC 55618 / DSM 22257 / CCUG 43843 / 130Z) protein is NADPH-dependent 7-cyano-7-deazaguanine reductase.